A 97-amino-acid polypeptide reads, in one-letter code: Large ribosomal subunit protein bL28 (97 aa).

It belongs to the bacterial ribosomal protein bL28 family.

In Rickettsia felis (strain ATCC VR-1525 / URRWXCal2) (Rickettsia azadi), this protein is Large ribosomal subunit protein bL28.